The sequence spans 938 residues: Isoleucine--tRNA ligase (938 aa).

A 'HIGH' region motif is present at residues 58 to 68 (PYANGSIHIGH). Lys183 carries the post-translational modification N6-acetyllysine. Glu561 serves as a coordination point for L-isoleucyl-5'-AMP. A 'KMSKS' region motif is present at residues 602 to 606 (KMSKS). Residue Lys605 participates in ATP binding. Zn(2+) is bound by residues Cys901, Cys904, Cys921, and Cys924.

It belongs to the class-I aminoacyl-tRNA synthetase family. IleS type 1 subfamily. In terms of assembly, monomer. Zn(2+) is required as a cofactor.

Its subcellular location is the cytoplasm. The enzyme catalyses tRNA(Ile) + L-isoleucine + ATP = L-isoleucyl-tRNA(Ile) + AMP + diphosphate. Its function is as follows. Catalyzes the attachment of isoleucine to tRNA(Ile). As IleRS can inadvertently accommodate and process structurally similar amino acids such as valine, to avoid such errors it has two additional distinct tRNA(Ile)-dependent editing activities. One activity is designated as 'pretransfer' editing and involves the hydrolysis of activated Val-AMP. The other activity is designated 'posttransfer' editing and involves deacylation of mischarged Val-tRNA(Ile). The polypeptide is Isoleucine--tRNA ligase (Escherichia coli O6:H1 (strain CFT073 / ATCC 700928 / UPEC)).